Here is a 285-residue protein sequence, read N- to C-terminus: Putative pyruvate, phosphate dikinase regulatory protein (285 aa).

ADP is bound at residue 165 to 172 (GVSRTSKT).

Belongs to the pyruvate, phosphate/water dikinase regulatory protein family. PDRP subfamily.

It catalyses the reaction N(tele)-phospho-L-histidyl/L-threonyl-[pyruvate, phosphate dikinase] + ADP = N(tele)-phospho-L-histidyl/O-phospho-L-threonyl-[pyruvate, phosphate dikinase] + AMP + H(+). It carries out the reaction N(tele)-phospho-L-histidyl/O-phospho-L-threonyl-[pyruvate, phosphate dikinase] + phosphate + H(+) = N(tele)-phospho-L-histidyl/L-threonyl-[pyruvate, phosphate dikinase] + diphosphate. Functionally, bifunctional serine/threonine kinase and phosphorylase involved in the regulation of the pyruvate, phosphate dikinase (PPDK) by catalyzing its phosphorylation/dephosphorylation. The sequence is that of Putative pyruvate, phosphate dikinase regulatory protein from Lactobacillus delbrueckii subsp. bulgaricus (strain ATCC 11842 / DSM 20081 / BCRC 10696 / JCM 1002 / NBRC 13953 / NCIMB 11778 / NCTC 12712 / WDCM 00102 / Lb 14).